We begin with the raw amino-acid sequence, 583 residues long: DNA ligase (583 aa).

Glu-249 is a binding site for ATP. Residue Lys-251 is the N6-AMP-lysine intermediate of the active site. Arg-256, Arg-271, Glu-301, Phe-341, Arg-416, and Lys-422 together coordinate ATP.

Belongs to the ATP-dependent DNA ligase family. Mg(2+) serves as cofactor.

It carries out the reaction ATP + (deoxyribonucleotide)n-3'-hydroxyl + 5'-phospho-(deoxyribonucleotide)m = (deoxyribonucleotide)n+m + AMP + diphosphate.. DNA ligase that seals nicks in double-stranded DNA during DNA replication, DNA recombination and DNA repair. This is DNA ligase from Pyrobaculum calidifontis (strain DSM 21063 / JCM 11548 / VA1).